The following is a 501-amino-acid chain: Cystine/glutamate transporter (501 aa).

Over 1–43 (MVRKPVVSTISKGGYLQGNVNGRLPSLGNKEPPGQEKVQLKRK) the chain is Cytoplasmic. Ser-26 is subject to Phosphoserine. The chain crosses the membrane as a helical span at residues 44–64 (VTLLRGVSIIIGTIIGAGIFI). Residues 65–74 (SPKGVLQNTG) lie on the Extracellular side of the membrane. The chain crosses the membrane as a helical span at residues 75–95 (SVGMSLTIWTVCGVLSLFGAL). Over 96 to 101 (SYAELG) the chain is Cytoplasmic. An intramembrane segment occupies 102-116 (TTIKKSGGHYTYILE). Residues 117–130 (VFGPLPAFVRVWVE) are Cytoplasmic-facing. Residues 131–150 (LLIIRPAATAVISLAFGRYI) traverse the membrane as a helical segment. Arg-135 is a binding site for L-glutamate. Topologically, residues 151-163 (LEPFFIQCEIPEL) are extracellular. A helical membrane pass occupies residues 164–179 (AIKLITAVGITVVMVL). At 180–193 (NSMSVSWSARIQIF) the chain is on the cytoplasmic side. A helical membrane pass occupies residues 194–210 (LTFCKLTAILIIIVPGV). Topologically, residues 211-234 (MQLIKGQTQNFKDAFSGRDSSITR) are extracellular. A helical membrane pass occupies residues 235-255 (LPLAFYYGMYAYAGWFYLNFV). Tyr-244 lines the L-glutamate pocket. Residues 256–265 (TEEVENPEKT) lie on the Cytoplasmic side of the membrane. The chain crosses the membrane as a helical span at residues 266 to 286 (IPLAICISMAIVTIGYVLTNV). Over 287 to 317 (AYFTTINAEELLLSNAVAVTFSERLLGNFSL) the chain is Extracellular. N-linked (GlcNAc...) asparagine glycosylation is present at Asn-314. Residues 318 to 338 (AVPIFVALSCFGSMNGGVFAV) traverse the membrane as a helical segment. Topologically, residues 339–364 (SRLFYVASREGHLPEILSMIHVRKHT) are cytoplasmic. Residues 365–385 (PLPAVIVLHPLTMIMLFSGDL) traverse the membrane as a helical segment. The Extracellular portion of the chain corresponds to 386 to 387 (DS). The helical transmembrane segment at 388 to 408 (LLNFLSFARWLFIGLAVAGLI) threads the bilayer. At 409 to 422 (YLRYKCPDMHRPFK) the chain is on the cytoplasmic side. The helical transmembrane segment at 423–443 (VPLFIPALFSFTCLFMVALSL) threads the bilayer. At 444–449 (YSDPFS) the chain is on the extracellular side. The chain crosses the membrane as a helical span at residues 450–470 (TGIGSVITLTGVPAYYLFIIW). Over 471 to 501 (DKKPRWFRIMSEKITRTLQIILEVVPEEDKL) the chain is Cytoplasmic.

It belongs to the amino acid-polyamine-organocation (APC) superfamily. L-type amino acid transporter (LAT) (TC 2.A.3.8) family. Disulfide-linked heterodimer with the amino acid transport protein SLC3A2/4F2hc; this interaction mediates cell membrane localization.

The protein localises to the cell membrane. It is found in the cell projection. It localises to the microvillus membrane. It carries out the reaction L-cystine(out) + L-glutamate(in) = L-cystine(in) + L-glutamate(out). It catalyses the reaction an L-alpha-amino acid(in) + L-kynurenine(out) = an L-alpha-amino acid(out) + L-kynurenine(in). The enzyme catalyses N-acetyl-L-cysteine(out) + L-glutamate(in) = N-acetyl-L-cysteine(in) + L-glutamate(out). In terms of biological role, heterodimer with SLC3A2, that functions as an antiporter by mediating the exchange of extracellular anionic L-cystine and intracellular L-glutamate across the cellular plasma membrane. Provides L-cystine for the maintenance of the redox balance between extracellular L-cystine and L-cysteine and for the maintenance of the intracellular levels of glutathione that is essential for cells protection from oxidative stress. The transport is sodium-independent, electroneutral with a stoichiometry of 1:1, and is drove by the high intracellular concentration of L-glutamate and the intracellular reduction of L-cystine. In addition, mediates the import of L-kynurenine leading to anti-ferroptotic signaling propagation required to maintain L-cystine and glutathione homeostasis. Moreover, mediates N-acetyl-L-cysteine uptake into the placenta leading to subsequently down-regulation of pathways associated with oxidative stress, inflammation and apoptosis. In vitro can also transport L-aspartate. May participate in astrocyte and meningeal cell proliferation during development and can provide neuroprotection by promoting glutathione synthesis and delivery from non-neuronal cells such as astrocytes and meningeal cells to immature neurons. Controls the production of pheomelanin pigment directly. The chain is Cystine/glutamate transporter from Pongo abelii (Sumatran orangutan).